Here is a 324-residue protein sequence, read N- to C-terminus: 4-hydroxy-3-methylbut-2-enyl diphosphate reductase (324 aa).

Cysteine 13 serves as a coordination point for [4Fe-4S] cluster. (2E)-4-hydroxy-3-methylbut-2-enyl diphosphate-binding residues include histidine 41 and histidine 75. Residues histidine 41 and histidine 75 each coordinate dimethylallyl diphosphate. Isopentenyl diphosphate contacts are provided by histidine 41 and histidine 75. Cysteine 97 provides a ligand contact to [4Fe-4S] cluster. Histidine 125 is a binding site for (2E)-4-hydroxy-3-methylbut-2-enyl diphosphate. Histidine 125 lines the dimethylallyl diphosphate pocket. Histidine 125 contributes to the isopentenyl diphosphate binding site. Glutamate 127 functions as the Proton donor in the catalytic mechanism. Threonine 168 serves as a coordination point for (2E)-4-hydroxy-3-methylbut-2-enyl diphosphate. Cysteine 225 contacts [4Fe-4S] cluster. Positions 253, 254, 255, and 302 each coordinate (2E)-4-hydroxy-3-methylbut-2-enyl diphosphate. Dimethylallyl diphosphate contacts are provided by serine 253, serine 254, asparagine 255, and serine 302. Residues serine 253, serine 254, asparagine 255, and serine 302 each contribute to the isopentenyl diphosphate site.

The protein belongs to the IspH family. [4Fe-4S] cluster is required as a cofactor.

The enzyme catalyses isopentenyl diphosphate + 2 oxidized [2Fe-2S]-[ferredoxin] + H2O = (2E)-4-hydroxy-3-methylbut-2-enyl diphosphate + 2 reduced [2Fe-2S]-[ferredoxin] + 2 H(+). The catalysed reaction is dimethylallyl diphosphate + 2 oxidized [2Fe-2S]-[ferredoxin] + H2O = (2E)-4-hydroxy-3-methylbut-2-enyl diphosphate + 2 reduced [2Fe-2S]-[ferredoxin] + 2 H(+). Its pathway is isoprenoid biosynthesis; dimethylallyl diphosphate biosynthesis; dimethylallyl diphosphate from (2E)-4-hydroxy-3-methylbutenyl diphosphate: step 1/1. The protein operates within isoprenoid biosynthesis; isopentenyl diphosphate biosynthesis via DXP pathway; isopentenyl diphosphate from 1-deoxy-D-xylulose 5-phosphate: step 6/6. Its function is as follows. Catalyzes the conversion of 1-hydroxy-2-methyl-2-(E)-butenyl 4-diphosphate (HMBPP) into a mixture of isopentenyl diphosphate (IPP) and dimethylallyl diphosphate (DMAPP). Acts in the terminal step of the DOXP/MEP pathway for isoprenoid precursor biosynthesis. This Chlorobium limicola (strain DSM 245 / NBRC 103803 / 6330) protein is 4-hydroxy-3-methylbut-2-enyl diphosphate reductase.